A 112-amino-acid polypeptide reads, in one-letter code: C-C motif chemokine 27 (112 aa).

The signal sequence occupies residues 1 to 24 (MKGPPTFCSLLLLSLLLSPDPTAA). 2 cysteine pairs are disulfide-bonded: C33-C62 and C34-C77.

It belongs to the intercrine beta (chemokine CC) family. As to quaternary structure, monomer, dimer, and tetramer. Heparin avidly promotes oligomerization. Interacts with TNFAIP6 (via Link domain). Testis, thymus, placenta, ovary and skin.

The protein resides in the secreted. In terms of biological role, chemotactic factor that attracts skin-associated memory T-lymphocytes. May play a role in mediating homing of lymphocytes to cutaneous sites. Binds to CCR10. This chain is C-C motif chemokine 27 (CCL27), found in Homo sapiens (Human).